The following is a 113-amino-acid chain: Hydrogenase maturation factor HypA (113 aa).

His2 lines the Ni(2+) pocket. Positions 73, 76, 89, and 92 each coordinate Zn(2+).

Belongs to the HypA/HybF family.

Its function is as follows. Involved in the maturation of [NiFe] hydrogenases. Required for nickel insertion into the metal center of the hydrogenase. This Legionella pneumophila subsp. pneumophila (strain Philadelphia 1 / ATCC 33152 / DSM 7513) protein is Hydrogenase maturation factor HypA.